Reading from the N-terminus, the 236-residue chain is OPEP-2 protein (236 aa).

This is OPEP-2 protein (OPEP-2) from Orgyia pseudotsugata (Douglas-fir tussock moth).